The following is a 122-amino-acid chain: Heat-labile enterotoxin IIB, B chain (122 aa).

Residues 1-23 form the signal peptide; it reads MSFKKIIKAFVIMAALVSVQAHA. Residues Cys-33 and Cys-104 are joined by a disulfide bond.

Heterohexamer of one A chain and of five B chains.

Its function is as follows. The biological activity of the toxin is produced by the A chain, which activates intracellular adenyl cyclase. The chain is Heat-labile enterotoxin IIB, B chain from Escherichia coli.